A 500-amino-acid chain; its full sequence is MRNQQSTQLLFELSRAGRRAHRLGDLDVPSVNVDELFADEALAETPPPLPELAEGDVVRHFVGLSTLNMSVDTHFYPLGSCTMKYNPKRNERIASLPGFLNVHPLQHESGLQGLLELLYELQGMFAEISGLPGVSMQPAAGAHGELAALLVAAAYFREQGSDRNVVLTADSAHGTNPASAQMAGFKTKTVKSNANGLVDLEDLKAKLDDKTAVFMLTNPNTLGLFDRQIEEINKLVHDAGALIYLDGANMNAILGITRPGDFGADLMHYNPHKTFSGPHGGGGPGAGPICVRDFLAKYLPGPIVTRVENENASGDDDRYTYHLTSPSDDSIGRVRSFFGNTGVLVRAYIYLRTYGGDGLRHVSEDAVLGANYLLSKVKHFLDVPHGDRCMHEFVASATRLKKEKKLSAMDIAKRILDYGFHAPTVYFPLVVDEAVMVEPTETESKQTLDAFVEALFRITEEGEELIHDAPHSTRISRPDDVTAARRPILKWTDAAGESAT.

The residue at position 273 (K273) is an N6-(pyridoxal phosphate)lysine.

This sequence belongs to the GcvP family. C-terminal subunit subfamily. As to quaternary structure, the glycine cleavage system is composed of four proteins: P, T, L and H. In this organism, the P 'protein' is a heterodimer of two subunits. It depends on pyridoxal 5'-phosphate as a cofactor.

It catalyses the reaction N(6)-[(R)-lipoyl]-L-lysyl-[glycine-cleavage complex H protein] + glycine + H(+) = N(6)-[(R)-S(8)-aminomethyldihydrolipoyl]-L-lysyl-[glycine-cleavage complex H protein] + CO2. Functionally, the glycine cleavage system catalyzes the degradation of glycine. The P protein binds the alpha-amino group of glycine through its pyridoxal phosphate cofactor; CO(2) is released and the remaining methylamine moiety is then transferred to the lipoamide cofactor of the H protein. The sequence is that of Probable glycine dehydrogenase (decarboxylating) subunit 2 from Rhodopirellula baltica (strain DSM 10527 / NCIMB 13988 / SH1).